A 329-amino-acid chain; its full sequence is MIPRWQPASIPLLLHLDTLRCHHVSVQPPRATMTSLNIKEEDIPRLDGKVVVISGGASGIGLAAANIFARAGAKIFLFDCNPPDSGEAPENSTFIKADITSWAELKAAFAQAGHVDIAVANAGVSEEQPYFEDTFDEQGELKEPGFAVVDVNFKGTVMFTKLAVSYMRKQGKGGSVVITASATGYAPEQNLPVYSAIKSGLVGLVRSLRSTLPRFDISINAVAPAATITKLLPMDIAGPLMAAGLPVSSAHMVGLAVVYSAVARQPRMVETYGKENVLDLESKWNGRTILTLGEHYTELEEKLADLRPVWFGWRNTDLTKKQQATADFR.

Serine 58, isoleucine 60, and asparagine 81 together coordinate NADP(+). The N-linked (GlcNAc...) asparagine glycan is linked to asparagine 91. NADP(+) is bound by residues aspartate 98, asparagine 121, lysine 161, tyrosine 194, lysine 198, and threonine 229. Tyrosine 194 serves as the catalytic Proton acceptor. The active-site Lowers pKa of active site Tyr is the lysine 198. Residues 238–258 (GPLMAAGLPVSSAHMVGLAVV) traverse the membrane as a helical segment.

It belongs to the short-chain dehydrogenases/reductases (SDR) family.

Its subcellular location is the membrane. It functions in the pathway sesquiterpene biosynthesis. Its function is as follows. Short-chain dehydrogenase/reductase; part of the gene cluster that mediates the biosynthesis of PR-toxin, a bicyclic sesquiterpene belonging to the eremophilane class and acting as a mycotoxin. The first step of the pathway is catalyzed by the aristolochene synthase which performs the cyclization of trans,trans-farnesyl diphosphate (FPP) to the bicyclic sesquiterpene aristolochene. Following the formation of aristolochene, the non-oxygenated aristolochene is converted to the trioxygenated intermediate eremofortin B, via 7-epi-neopetasone. This conversion appears to involve three enzymes, a hydroxysterol oxidase-like enzyme, the quinone-oxidase prx3 that forms the quinone-type-structure in the bicyclic nucleus of aristolochene with the C8-oxo group and the C-3 hydroxyl group, and the P450 monooxygenase ORF6 that introduces the epoxide at the double bond between carbons 1 and 2. No monoxy or dioxy-intermediates have been reported to be released to the broth, so these three early oxidative reactions may be coupled together. Eremofortin B is further oxidized by another P450 monooxygenase, that introduces a second epoxide between carbons 7 and 11 prior to acetylation to eremofortin A by the acetyltransferase ORF8. The second epoxidation may be performed by a second P450 monooxygenase. After the acetylation step, eremofortin A is converted to eremofortin C and then to PR-toxin. First the conversion of eremofortin A to eremofortin C proceeds by oxidation of the side chain of the molecule at C-12 and is catalyzed by the short-chain oxidoreductase prx1. The cytochrome P450 monooxygenase ORF6 is probably also involved in this step. The primary alcohol formed at C-12 is finally oxidized by the short-chain alcohol dehydrogenase prx4 that forms PR-toxin. This chain is Short-chain dehydrogenase/reductase prx4, found in Penicillium roqueforti.